Here is a 255-residue protein sequence, read N- to C-terminus: Phosphate import ATP-binding protein PstB (255 aa).

An ABC transporter domain is found at 9–250; that stretch reads MYAQGLQFYY…PRNKQTEDYI (242 aa). 41–48 serves as a coordination point for ATP; it reads GPSGCGKS.

This sequence belongs to the ABC transporter superfamily. Phosphate importer (TC 3.A.1.7) family. In terms of assembly, the complex is composed of two ATP-binding proteins (PstB), two transmembrane proteins (PstC and PstA) and a solute-binding protein (PstS).

Its subcellular location is the cell inner membrane. The catalysed reaction is phosphate(out) + ATP + H2O = ADP + 2 phosphate(in) + H(+). Its function is as follows. Part of the ABC transporter complex PstSACB involved in phosphate import. Responsible for energy coupling to the transport system. The protein is Phosphate import ATP-binding protein PstB of Nitratidesulfovibrio vulgaris (strain ATCC 29579 / DSM 644 / CCUG 34227 / NCIMB 8303 / VKM B-1760 / Hildenborough) (Desulfovibrio vulgaris).